The primary structure comprises 195 residues: ATP-dependent Clp protease proteolytic subunit 1 (195 aa).

Ser96 acts as the Nucleophile in catalysis. The active site involves His121.

This sequence belongs to the peptidase S14 family. In terms of assembly, fourteen ClpP subunits assemble into 2 heptameric rings which stack back to back to give a disk-like structure with a central cavity, resembling the structure of eukaryotic proteasomes.

It localises to the cytoplasm. The enzyme catalyses Hydrolysis of proteins to small peptides in the presence of ATP and magnesium. alpha-casein is the usual test substrate. In the absence of ATP, only oligopeptides shorter than five residues are hydrolyzed (such as succinyl-Leu-Tyr-|-NHMec, and Leu-Tyr-Leu-|-Tyr-Trp, in which cleavage of the -Tyr-|-Leu- and -Tyr-|-Trp bonds also occurs).. In terms of biological role, cleaves peptides in various proteins in a process that requires ATP hydrolysis. Has a chymotrypsin-like activity. Plays a major role in the degradation of misfolded proteins. This chain is ATP-dependent Clp protease proteolytic subunit 1, found in Prochlorococcus marinus (strain MIT 9312).